The chain runs to 104 residues: MIRKGFVMQVNPDCHAEYKKRHDEIFPELVEELKSHGAHHYSIFLDKQRNLLFGYVEIENEQRWNDVAKTAACRKWWAFMRDVMPSNPDNSPVSQELEQVFYLD.

Residue Tyr18 participates in substrate binding. The active-site Proton donor is His22. Substrate is bound by residues Tyr41 and 76–77; that span reads WW.

This sequence belongs to the rhamnose mutarotase family. As to quaternary structure, homodimer.

The protein localises to the cytoplasm. The catalysed reaction is alpha-L-rhamnose = beta-L-rhamnose. Its pathway is carbohydrate metabolism; L-rhamnose metabolism. Involved in the anomeric conversion of L-rhamnose. In Mannheimia succiniciproducens (strain KCTC 0769BP / MBEL55E), this protein is L-rhamnose mutarotase.